Here is a 393-residue protein sequence, read N- to C-terminus: uncharacterized protein (393 aa).

Belongs to the Gfo/Idh/MocA family.

This is an uncharacterized protein from Bacillus subtilis (strain 168).